The chain runs to 313 residues: 4-hydroxy-3-methylbut-2-enyl diphosphate reductase (313 aa).

[4Fe-4S] cluster is bound at residue cysteine 12. Positions 41 and 74 each coordinate (2E)-4-hydroxy-3-methylbut-2-enyl diphosphate. The dimethylallyl diphosphate site is built by histidine 41 and histidine 74. Histidine 41 and histidine 74 together coordinate isopentenyl diphosphate. [4Fe-4S] cluster is bound at residue cysteine 96. Histidine 124 contributes to the (2E)-4-hydroxy-3-methylbut-2-enyl diphosphate binding site. Residue histidine 124 coordinates dimethylallyl diphosphate. Histidine 124 contacts isopentenyl diphosphate. Glutamate 126 functions as the Proton donor in the catalytic mechanism. Residue threonine 167 participates in (2E)-4-hydroxy-3-methylbut-2-enyl diphosphate binding. Position 197 (cysteine 197) interacts with [4Fe-4S] cluster. 4 residues coordinate (2E)-4-hydroxy-3-methylbut-2-enyl diphosphate: serine 225, serine 226, asparagine 227, and serine 269. Serine 225, serine 226, asparagine 227, and serine 269 together coordinate dimethylallyl diphosphate. 4 residues coordinate isopentenyl diphosphate: serine 225, serine 226, asparagine 227, and serine 269.

Belongs to the IspH family. The cofactor is [4Fe-4S] cluster.

The enzyme catalyses isopentenyl diphosphate + 2 oxidized [2Fe-2S]-[ferredoxin] + H2O = (2E)-4-hydroxy-3-methylbut-2-enyl diphosphate + 2 reduced [2Fe-2S]-[ferredoxin] + 2 H(+). It catalyses the reaction dimethylallyl diphosphate + 2 oxidized [2Fe-2S]-[ferredoxin] + H2O = (2E)-4-hydroxy-3-methylbut-2-enyl diphosphate + 2 reduced [2Fe-2S]-[ferredoxin] + 2 H(+). It participates in isoprenoid biosynthesis; dimethylallyl diphosphate biosynthesis; dimethylallyl diphosphate from (2E)-4-hydroxy-3-methylbutenyl diphosphate: step 1/1. The protein operates within isoprenoid biosynthesis; isopentenyl diphosphate biosynthesis via DXP pathway; isopentenyl diphosphate from 1-deoxy-D-xylulose 5-phosphate: step 6/6. Catalyzes the conversion of 1-hydroxy-2-methyl-2-(E)-butenyl 4-diphosphate (HMBPP) into a mixture of isopentenyl diphosphate (IPP) and dimethylallyl diphosphate (DMAPP). Acts in the terminal step of the DOXP/MEP pathway for isoprenoid precursor biosynthesis. The chain is 4-hydroxy-3-methylbut-2-enyl diphosphate reductase from Methylococcus capsulatus (strain ATCC 33009 / NCIMB 11132 / Bath).